Here is a 430-residue protein sequence, read N- to C-terminus: Adenylosuccinate synthetase (430 aa).

Residues 12–18 (GDEGKGK) and 40–42 (GHT) each bind GTP. Asp13 (proton acceptor) is an active-site residue. Mg(2+) contacts are provided by Asp13 and Gly40. Residues 13–16 (DEGK), 38–41 (NAGH), Thr128, Arg142, Gln223, Thr238, and Arg302 contribute to the IMP site. The active-site Proton donor is the His41. 298-304 (TTTGRPR) is a binding site for substrate. Residues Arg304, 330–332 (SID), and 412–414 (SVG) each bind GTP.

Belongs to the adenylosuccinate synthetase family. As to quaternary structure, homodimer. Mg(2+) is required as a cofactor.

It localises to the cytoplasm. The enzyme catalyses IMP + L-aspartate + GTP = N(6)-(1,2-dicarboxyethyl)-AMP + GDP + phosphate + 2 H(+). It participates in purine metabolism; AMP biosynthesis via de novo pathway; AMP from IMP: step 1/2. In terms of biological role, plays an important role in the de novo pathway of purine nucleotide biosynthesis. Catalyzes the first committed step in the biosynthesis of AMP from IMP. This Streptococcus pyogenes serotype M2 (strain MGAS10270) protein is Adenylosuccinate synthetase.